Reading from the N-terminus, the 50-residue chain is uncharacterized protein (50 aa).

This is an uncharacterized protein from Dictyostelium discoideum (Social amoeba).